The sequence spans 415 residues: ATP-dependent RNA helicase RhlB (415 aa).

The Q motif signature appears at 9 to 37 (KKFSDFALYPPIVEVLDSKGFNNCTPIQA). Residues 40–219 (LPTTLAGKDV…FEHMNNAEYV (180 aa)) enclose the Helicase ATP-binding domain. Residue 53-60 (AQTGTGKT) participates in ATP binding. The short motif at 165–168 (DEAD) is the DEAD box element. Residues 245–390 (RLLQTLIEEE…VSKYNSDALL (146 aa)) form the Helicase C-terminal domain. Residues 396 to 415 (PKRLTRRRSGAPRHNRKRPG) are disordered. Basic residues predominate over residues 398-415 (RLTRRRSGAPRHNRKRPG).

The protein belongs to the DEAD box helicase family. RhlB subfamily. In terms of assembly, component of the RNA degradosome, which is a multiprotein complex involved in RNA processing and mRNA degradation.

The protein resides in the cytoplasm. The catalysed reaction is ATP + H2O = ADP + phosphate + H(+). DEAD-box RNA helicase involved in RNA degradation. Has RNA-dependent ATPase activity and unwinds double-stranded RNA. This chain is ATP-dependent RNA helicase RhlB, found in Sodalis glossinidius (strain morsitans).